We begin with the raw amino-acid sequence, 235 residues long: Small ribosomal subunit protein uS3 (235 aa).

In terms of domain architecture, KH type-2 spans 39-107 (VRKFLNKELA…PAQINIAEVK (69 aa)). The tract at residues 215-235 (AQPEQQPADKPKKAPRGKGRK) is disordered.

The protein belongs to the universal ribosomal protein uS3 family. In terms of assembly, part of the 30S ribosomal subunit. Forms a tight complex with proteins S10 and S14.

Functionally, binds the lower part of the 30S subunit head. Binds mRNA in the 70S ribosome, positioning it for translation. The protein is Small ribosomal subunit protein uS3 of Pasteurella multocida (strain Pm70).